The primary structure comprises 608 residues: Replication protein E1 (608 aa).

The short motif at 83–85 (KRK) is the Nuclear localization signal element. Phosphoserine; by host occurs at positions 88 and 96. Residues 148–311 (QGGVGSGHYT…TMIHHQTADS (164 aa)) form a DNA-binding region region. Residues 410 to 560 (LNFIVFLDKF…FPFDANDTPL (151 aa)) form the SF3 helicase domain. 436–443 (GPPDTGKS) serves as a coordination point for ATP. Lys517 is covalently cross-linked (Glycyl lysine isopeptide (Lys-Gly) (interchain with G-Cter in SUMO)).

It belongs to the papillomaviridae E1 protein family. As to quaternary structure, can form hexamers. Interacts with E2 protein; this interaction increases E1 DNA binding specificity. Interacts with host DNA polymerase subunit POLA2. Interacts with host single stranded DNA-binding protein RPA1. Interacts with host TOP1; this interaction stimulates the enzymatic activity of TOP1. Post-translationally, phosphorylated. In terms of processing, sumoylated.

Its subcellular location is the host nucleus. It catalyses the reaction Couples ATP hydrolysis with the unwinding of duplex DNA by translocating in the 3'-5' direction.. The enzyme catalyses ATP + H2O = ADP + phosphate + H(+). Its function is as follows. ATP-dependent DNA 3'-5' helicase required for initiation of viral DNA replication. It forms a complex with the viral E2 protein. The E1-E2 complex binds to the replication origin which contains binding sites for both proteins. During the initial step, a dimer of E1 interacts with a dimer of protein E2 leading to a complex that binds the viral origin of replication with high specificity. Then, a second dimer of E1 displaces the E2 dimer in an ATP-dependent manner to form the E1 tetramer. Following this, two E1 monomers are added to each half of the site, which results in the formation of two E1 trimers on the viral ori. Subsequently, two hexamers will be created. The double hexamer acts as a bi-directional helicase machinery and unwinds the viral DNA and then recruits the host DNA polymerase to start replication. This Homo sapiens (Human) protein is Replication protein E1.